Here is a 321-residue protein sequence, read N- to C-terminus: Lipoyl synthase (321 aa).

[4Fe-4S] cluster contacts are provided by cysteine 68, cysteine 73, cysteine 79, cysteine 94, cysteine 98, cysteine 101, and serine 308. The Radical SAM core domain maps to phenylalanine 80 to threonine 297.

It belongs to the radical SAM superfamily. Lipoyl synthase family. The cofactor is [4Fe-4S] cluster.

Its subcellular location is the cytoplasm. It carries out the reaction [[Fe-S] cluster scaffold protein carrying a second [4Fe-4S](2+) cluster] + N(6)-octanoyl-L-lysyl-[protein] + 2 oxidized [2Fe-2S]-[ferredoxin] + 2 S-adenosyl-L-methionine + 4 H(+) = [[Fe-S] cluster scaffold protein] + N(6)-[(R)-dihydrolipoyl]-L-lysyl-[protein] + 4 Fe(3+) + 2 hydrogen sulfide + 2 5'-deoxyadenosine + 2 L-methionine + 2 reduced [2Fe-2S]-[ferredoxin]. The protein operates within protein modification; protein lipoylation via endogenous pathway; protein N(6)-(lipoyl)lysine from octanoyl-[acyl-carrier-protein]: step 2/2. In terms of biological role, catalyzes the radical-mediated insertion of two sulfur atoms into the C-6 and C-8 positions of the octanoyl moiety bound to the lipoyl domains of lipoate-dependent enzymes, thereby converting the octanoylated domains into lipoylated derivatives. In Edwardsiella ictaluri (strain 93-146), this protein is Lipoyl synthase.